The following is a 237-amino-acid chain: Coat protein (237 aa).

The interval 1–24 is disordered; sequence MSAPASTTQATGSTTSTTTKTAGA.

This sequence belongs to the potexvirus capsid protein family.

It localises to the virion. Required for genome encapsidation. Forms ribonucleoprotein complexes along with TGB1 helicase and viral RNA. This chain is Coat protein, found in Brassica campestris (Field mustard).